Reading from the N-terminus, the 205-residue chain is Holliday junction branch migration complex subunit RuvA (205 aa).

A domain I region spans residues 1–67 (MIGWLKGDVQ…ADNLQLFGFL (67 aa)). A domain II region spans residues 68–146 (QLAERDLFRE…DSVASTGPER (79 aa)). Residues 147 to 155 (NQLDPVAPD) form a flexible linker region. Residues 155–205 (DLIATLETLGFETHEIRDALQRLNGMGGPQDGDDDDAWLRACIKLMSSTDP) are domain III.

Belongs to the RuvA family. In terms of assembly, homotetramer. Forms an RuvA(8)-RuvB(12)-Holliday junction (HJ) complex. HJ DNA is sandwiched between 2 RuvA tetramers; dsDNA enters through RuvA and exits via RuvB. An RuvB hexamer assembles on each DNA strand where it exits the tetramer. Each RuvB hexamer is contacted by two RuvA subunits (via domain III) on 2 adjacent RuvB subunits; this complex drives branch migration. In the full resolvosome a probable DNA-RuvA(4)-RuvB(12)-RuvC(2) complex forms which resolves the HJ.

Its subcellular location is the cytoplasm. Its function is as follows. The RuvA-RuvB-RuvC complex processes Holliday junction (HJ) DNA during genetic recombination and DNA repair, while the RuvA-RuvB complex plays an important role in the rescue of blocked DNA replication forks via replication fork reversal (RFR). RuvA specifically binds to HJ cruciform DNA, conferring on it an open structure. The RuvB hexamer acts as an ATP-dependent pump, pulling dsDNA into and through the RuvAB complex. HJ branch migration allows RuvC to scan DNA until it finds its consensus sequence, where it cleaves and resolves the cruciform DNA. The polypeptide is Holliday junction branch migration complex subunit RuvA (Parasynechococcus marenigrum (strain WH8102)).